The primary structure comprises 197 residues: Large ribosomal subunit protein uL13A (197 aa).

S151 carries the post-translational modification Phosphoserine.

This sequence belongs to the universal ribosomal protein uL13 family. In terms of assembly, component of the large ribosomal subunit (LSU). Mature yeast ribosomes consist of a small (40S) and a large (60S) subunit. The 40S small subunit contains 1 molecule of ribosomal RNA (18S rRNA) and at least 33 different proteins. The large 60S subunit contains 3 rRNA molecules (25S, 5.8S and 5S rRNA) and at least 46 different proteins.

It is found in the cytoplasm. The protein localises to the nucleus. Its subcellular location is the nucleolus. Component of the ribosome, a large ribonucleoprotein complex responsible for the synthesis of proteins in the cell. The small ribosomal subunit (SSU) binds messenger RNAs (mRNAs) and translates the encoded message by selecting cognate aminoacyl-transfer RNA (tRNA) molecules. The large subunit (LSU) contains the ribosomal catalytic site termed the peptidyl transferase center (PTC), which catalyzes the formation of peptide bonds, thereby polymerizing the amino acids delivered by tRNAs into a polypeptide chain. The nascent polypeptides leave the ribosome through a tunnel in the LSU and interact with protein factors that function in enzymatic processing, targeting, and the membrane insertion of nascent chains at the exit of the ribosomal tunnel. The sequence is that of Large ribosomal subunit protein uL13A (rpl1602) from Schizosaccharomyces pombe (strain 972 / ATCC 24843) (Fission yeast).